The sequence spans 509 residues: ATP synthase subunit alpha (509 aa).

169–176 serves as a coordination point for ATP; the sequence is GDRQTGKT.

This sequence belongs to the ATPase alpha/beta chains family. In terms of assembly, F-type ATPases have 2 components, CF(1) - the catalytic core - and CF(0) - the membrane proton channel. CF(1) has five subunits: alpha(3), beta(3), gamma(1), delta(1), epsilon(1). CF(0) has three main subunits: a(1), b(2) and c(9-12). The alpha and beta chains form an alternating ring which encloses part of the gamma chain. CF(1) is attached to CF(0) by a central stalk formed by the gamma and epsilon chains, while a peripheral stalk is formed by the delta and b chains.

Its subcellular location is the cell inner membrane. It carries out the reaction ATP + H2O + 4 H(+)(in) = ADP + phosphate + 5 H(+)(out). Functionally, produces ATP from ADP in the presence of a proton gradient across the membrane. The alpha chain is a regulatory subunit. The chain is ATP synthase subunit alpha from Rhizobium leguminosarum bv. trifolii (strain WSM2304).